We begin with the raw amino-acid sequence, 216 residues long: Large ribosomal subunit protein uL3 (216 aa).

This sequence belongs to the universal ribosomal protein uL3 family. As to quaternary structure, part of the 50S ribosomal subunit. Forms a cluster with proteins L14 and L19.

Its function is as follows. One of the primary rRNA binding proteins, it binds directly near the 3'-end of the 23S rRNA, where it nucleates assembly of the 50S subunit. The polypeptide is Large ribosomal subunit protein uL3 (Symbiobacterium thermophilum (strain DSM 24528 / JCM 14929 / IAM 14863 / T)).